We begin with the raw amino-acid sequence, 378 residues long: Queuine tRNA-ribosyltransferase (378 aa).

Asp89 serves as the catalytic Proton acceptor. Residues 89-93, Asp143, Gln194, and Gly221 each bind substrate; that span reads DSGGF. Residues 252 to 258 form an RNA binding region; the sequence is GVGTPAN. The Nucleophile role is filled by Asp271. Zn(2+)-binding residues include Cys309, Cys311, Cys314, and His340.

Belongs to the queuine tRNA-ribosyltransferase family. As to quaternary structure, homodimer. Within each dimer, one monomer is responsible for RNA recognition and catalysis, while the other monomer binds to the replacement base PreQ1. It depends on Zn(2+) as a cofactor.

The enzyme catalyses 7-aminomethyl-7-carbaguanine + guanosine(34) in tRNA = 7-aminomethyl-7-carbaguanosine(34) in tRNA + guanine. Its pathway is tRNA modification; tRNA-queuosine biosynthesis. Its function is as follows. Catalyzes the base-exchange of a guanine (G) residue with the queuine precursor 7-aminomethyl-7-deazaguanine (PreQ1) at position 34 (anticodon wobble position) in tRNAs with GU(N) anticodons (tRNA-Asp, -Asn, -His and -Tyr). Catalysis occurs through a double-displacement mechanism. The nucleophile active site attacks the C1' of nucleotide 34 to detach the guanine base from the RNA, forming a covalent enzyme-RNA intermediate. The proton acceptor active site deprotonates the incoming PreQ1, allowing a nucleophilic attack on the C1' of the ribose to form the product. After dissociation, two additional enzymatic reactions on the tRNA convert PreQ1 to queuine (Q), resulting in the hypermodified nucleoside queuosine (7-(((4,5-cis-dihydroxy-2-cyclopenten-1-yl)amino)methyl)-7-deazaguanosine). This is Queuine tRNA-ribosyltransferase from Lachnospira eligens (strain ATCC 27750 / DSM 3376 / VPI C15-48 / C15-B4) (Eubacterium eligens).